The sequence spans 255 residues: 5'-nucleotidase SurE (255 aa).

Residues Asp8, Asp9, Ser40, and Asn93 each contribute to the a divalent metal cation site.

The protein belongs to the SurE nucleotidase family. The cofactor is a divalent metal cation.

The protein resides in the cytoplasm. The enzyme catalyses a ribonucleoside 5'-phosphate + H2O = a ribonucleoside + phosphate. Functionally, nucleotidase that shows phosphatase activity on nucleoside 5'-monophosphates. This is 5'-nucleotidase SurE from Nitrobacter hamburgensis (strain DSM 10229 / NCIMB 13809 / X14).